Here is a 144-residue protein sequence, read N- to C-terminus: Hemoglobin embryonic subunit alpha (144 aa).

The region spanning 3–144 (SLSAKDKDVV…LALALAEKYR (142 aa)) is the Globin domain. His61 contributes to the O2 binding site. Heme b is bound at residue His90.

Belongs to the globin family. As to quaternary structure, heterotetramer of two alpha chains and two beta chains. In terms of tissue distribution, red blood cells.

Functionally, involved in oxygen transport from gills to the various peripheral tissues. The chain is Hemoglobin embryonic subunit alpha from Oryzias latipes (Japanese rice fish).